Here is a 259-residue protein sequence, read N- to C-terminus: F-box/kelch-repeat protein At2g22050 (259 aa).

Basic residues predominate over residues 1-12 (MSPSSKKFKKQS). Positions 1–29 (MSPSSKKFKKQSSSKSVKPPLEDNDPSLP) are disordered. One can recognise an F-box domain in the interval 28-76 (LPSFTSLPDEIVLDCLQRVPRSYYLNLCRVSKTLRSLVRSPELSRLRTL). The Kelch repeat unit spans residues 142–186 (EIYFVGGSFEPMSELWILDTRTGMFRQGPSMKVARTDEASVGVIN).

In Arabidopsis thaliana (Mouse-ear cress), this protein is F-box/kelch-repeat protein At2g22050.